The sequence spans 390 residues: Dual-specificity RNA methyltransferase RlmN (390 aa).

Residue Glu126 is the Proton acceptor of the active site. The 241-residue stretch at 134–374 (TEDRGAVCLS…APVRTPRGQD (241 aa)) folds into the Radical SAM core domain. Cys141 and Cys379 are disulfide-bonded. Positions 148, 152, and 155 each coordinate [4Fe-4S] cluster. S-adenosyl-L-methionine contacts are provided by residues 205–206 (GE), Ser237, 259–261 (SLH), and Asn336. Catalysis depends on Cys379, which acts as the S-methylcysteine intermediate.

It belongs to the radical SAM superfamily. RlmN family. [4Fe-4S] cluster serves as cofactor.

It localises to the cytoplasm. It catalyses the reaction adenosine(2503) in 23S rRNA + 2 reduced [2Fe-2S]-[ferredoxin] + 2 S-adenosyl-L-methionine = 2-methyladenosine(2503) in 23S rRNA + 5'-deoxyadenosine + L-methionine + 2 oxidized [2Fe-2S]-[ferredoxin] + S-adenosyl-L-homocysteine. The catalysed reaction is adenosine(37) in tRNA + 2 reduced [2Fe-2S]-[ferredoxin] + 2 S-adenosyl-L-methionine = 2-methyladenosine(37) in tRNA + 5'-deoxyadenosine + L-methionine + 2 oxidized [2Fe-2S]-[ferredoxin] + S-adenosyl-L-homocysteine. Functionally, specifically methylates position 2 of adenine 2503 in 23S rRNA and position 2 of adenine 37 in tRNAs. m2A2503 modification seems to play a crucial role in the proofreading step occurring at the peptidyl transferase center and thus would serve to optimize ribosomal fidelity. The sequence is that of Dual-specificity RNA methyltransferase RlmN from Acidiphilium cryptum (strain JF-5).